A 497-amino-acid polypeptide reads, in one-letter code: Actin-binding protein WASF2 (497 aa).

Disordered stretches follow at residues 173-203 (KEKR…KEEW) and 239-436 (ENVD…SDAR). Over residues 252–263 (SDSASSPSPSFS) the composition is skewed to low complexity. Pro residues-rich tracts occupy residues 298–335 (SHPP…PPLP) and 343–403 (GTPP…PPLP). Residues 435 to 452 (ARSDLLSAIRQGFQLRRV) form the WH2 domain. Ser-473 is subject to Phosphoserine.

It belongs to the SCAR/WAVE family. In terms of assembly, binds actin and the Arp2/3 complex. Interacts with BAIAP2. Component of the WAVE2 complex composed of ABI1, CYFIP1/SRA1, NCKAP1/NAP1 (NCKAP1l/HEM1 in hematopoietic cells) and WASF2/WAVE2. Directly interacts with BRK1. Interacts with human cytomegalovirus protein UL135. Interacts with FNBP1L (via the SH3 domain).

It is found in the cytoplasm. It localises to the cytoskeleton. Its subcellular location is the cell projection. The protein resides in the lamellipodium. The protein localises to the basolateral cell membrane. In terms of biological role, downstream effector molecule involved in the transmission of signals from tyrosine kinase receptors and small GTPases to the actin cytoskeleton. Promotes formation of actin filaments. Part of the WAVE complex that regulates lamellipodia formation. The WAVE complex regulates actin filament reorganization via its interaction with the Arp2/3 complex. This Mus musculus (Mouse) protein is Actin-binding protein WASF2.